We begin with the raw amino-acid sequence, 243 residues long: MILFPAIDLKDGQCVRLKLGDMDQATIYNEDPAAQAKAFEDQGFEWLHVVDLNGAFAGESVNGTAVEAILKATKNPVQLGGGIRTLAHIENWLSRGLRRVILGTVAVRDPALVMEACKAFPGQVAVGIDAKGGKVAVEGWAEASRLGVIELAKKFEGAGVAAIIYTDIDRDGVLAGINWDSTLALAEAVSIPVIASGGLASMEDIRRLATPEMRKLEGAISGRALYDGRIDPAEALSVLRAAA.

The Proton acceptor role is filled by aspartate 8. Aspartate 129 (proton donor) is an active-site residue.

It belongs to the HisA/HisF family.

It localises to the cytoplasm. The enzyme catalyses 1-(5-phospho-beta-D-ribosyl)-5-[(5-phospho-beta-D-ribosylamino)methylideneamino]imidazole-4-carboxamide = 5-[(5-phospho-1-deoxy-D-ribulos-1-ylimino)methylamino]-1-(5-phospho-beta-D-ribosyl)imidazole-4-carboxamide. It participates in amino-acid biosynthesis; L-histidine biosynthesis; L-histidine from 5-phospho-alpha-D-ribose 1-diphosphate: step 4/9. This chain is 1-(5-phosphoribosyl)-5-[(5-phosphoribosylamino)methylideneamino] imidazole-4-carboxamide isomerase, found in Brucella abortus (strain 2308).